We begin with the raw amino-acid sequence, 1363 residues long: Neurexin-1 (1363 aa).

Over serine 1 to threonine 1287 the chain is Extracellular. Residue asparagine 49 is glycosylated (N-linked (GlcNAc...) asparagine). Positions glutamine 67 to serine 105 constitute an EGF-like 1 domain. Cystine bridges form between cysteine 71–cysteine 83, cysteine 77–cysteine 92, and cysteine 94–cysteine 104. Laminin G-like domains lie at isoleucine 132 to cysteine 329 and aspartate 336 to cysteine 528. Residues aspartate 178, leucine 195, and methionine 263 each contribute to the Ca(2+) site. Cystine bridges form between cysteine 293–cysteine 329, cysteine 499–cysteine 528, cysteine 536–cysteine 547, cysteine 541–cysteine 556, and cysteine 558–cysteine 568. Positions threonine 532–glutamate 569 constitute an EGF-like 2 domain. 2 Laminin G-like domains span residues isoleucine 574–cysteine 747 and aspartate 761–cysteine 936. N-linked (GlcNAc...) asparagine glycosylation is present at asparagine 646. 4 cysteine pairs are disulfide-bonded: cysteine 908–cysteine 936, cysteine 943–cysteine 954, cysteine 948–cysteine 963, and cysteine 965–cysteine 975. The EGF-like 3 domain occupies proline 939–asparagine 976. The 199-residue stretch at tyrosine 982 to valine 1180 folds into the Laminin G-like 5 domain. The N-linked (GlcNAc...) asparagine glycan is linked to asparagine 1079. The disordered stretch occupies residues cysteine 1244–isoleucine 1280. A helical transmembrane segment spans residues glycine 1288–methionine 1308. Topologically, residues tyrosine 1309–valine 1363 are cytoplasmic. The disordered stretch occupies residues asparagine 1330 to valine 1363.

Belongs to the neurexin family. In terms of assembly, the cytoplasmic C-terminal region binds to CASK. The laminin G-like domain 1 binds to NXPH1. Specific isoforms bind to alpha-dystroglycan and to alpha-latrotoxin. N- and O-glycosylated.

It is found in the membrane. In terms of biological role, neuronal cell surface protein that may be involved in cell recognition and cell adhesion. May mediate intracellular signaling. The protein is Neurexin-1 (NRXN1) of Gallus gallus (Chicken).